We begin with the raw amino-acid sequence, 66 residues long: Cold shock protein CspB (66 aa).

The CSD domain maps to 4–63; the sequence is GKVKWFNNEKGYGFIEVEGGSDVFVHFTAIQGEGFKTLEEGQEVSFEIVQGNRGPQAANV.

Homodimer.

The protein localises to the cytoplasm. In terms of biological role, affects cell viability at low temperatures. The chain is Cold shock protein CspB (cspB) from Bacillus caldolyticus.